Reading from the N-terminus, the 35-residue chain is Photosystem II reaction center protein T (35 aa).

Residues 3-23 (ALVYTFLLISTLGIIFFAIFF) form a helical membrane-spanning segment.

The protein belongs to the PsbT family. As to quaternary structure, PSII is composed of 1 copy each of membrane proteins PsbA, PsbB, PsbC, PsbD, PsbE, PsbF, PsbH, PsbI, PsbJ, PsbK, PsbL, PsbM, PsbT, PsbY, PsbZ, Psb30/Ycf12, at least 3 peripheral proteins of the oxygen-evolving complex and a large number of cofactors. It forms dimeric complexes.

The protein resides in the plastid. It localises to the chloroplast thylakoid membrane. Functionally, found at the monomer-monomer interface of the photosystem II (PS II) dimer, plays a role in assembly and dimerization of PSII. PSII is a light-driven water plastoquinone oxidoreductase, using light energy to abstract electrons from H(2)O, generating a proton gradient subsequently used for ATP formation. In Welwitschia mirabilis (Tree tumbo), this protein is Photosystem II reaction center protein T.